A 349-amino-acid chain; its full sequence is ATPase GET3 (349 aa).

Residue 26-33 participates in ATP binding; the sequence is KGGVGKTT. Asp57 is a catalytic residue. ATP-binding residues include Glu242 and Asn269. Zn(2+) is bound by residues Cys281 and Cys284.

This sequence belongs to the arsA ATPase family. As to quaternary structure, homodimer. Component of the Golgi to ER traffic (GET) complex, which is composed of GET1, GET2 and GET3. Within the complex, GET1 and GET2 form a heterotetramer which is stabilized by phosphatidylinositol binding and which binds to the GET3 homodimer. Interacts with the chloride channel protein GEF1.

The protein resides in the cytoplasm. The protein localises to the endoplasmic reticulum. Its subcellular location is the golgi apparatus. ATPase required for the post-translational delivery of tail-anchored (TA) proteins to the endoplasmic reticulum. Recognizes and selectively binds the transmembrane domain of TA proteins in the cytosol. This complex then targets to the endoplasmic reticulum by membrane-bound receptors GET1 and GET2, where the tail-anchored protein is released for insertion. This process is regulated by ATP binding and hydrolysis. ATP binding drives the homodimer towards the closed dimer state, facilitating recognition of newly synthesized TA membrane proteins. ATP hydrolysis is required for insertion. Subsequently, the homodimer reverts towards the open dimer state, lowering its affinity for the GET1-GET2 receptor, and returning it to the cytosol to initiate a new round of targeting. Cooperates with the HDEL receptor ERD2 to mediate the ATP-dependent retrieval of resident ER proteins that contain a C-terminal H-D-E-L retention signal from the Golgi to the ER. Involved in low-level resistance to the oxyanions arsenite and arsenate, and in heat tolerance. The protein is ATPase GET3 of Lodderomyces elongisporus (strain ATCC 11503 / CBS 2605 / JCM 1781 / NBRC 1676 / NRRL YB-4239) (Yeast).